The following is a 117-amino-acid chain: Large ribosomal subunit protein uL18 (117 aa).

The protein belongs to the universal ribosomal protein uL18 family. Part of the 50S ribosomal subunit; part of the 5S rRNA/L5/L18/L25 subcomplex. Contacts the 5S and 23S rRNAs.

Its function is as follows. This is one of the proteins that bind and probably mediate the attachment of the 5S RNA into the large ribosomal subunit, where it forms part of the central protuberance. The protein is Large ribosomal subunit protein uL18 of Acidithiobacillus ferrooxidans (strain ATCC 23270 / DSM 14882 / CIP 104768 / NCIMB 8455) (Ferrobacillus ferrooxidans (strain ATCC 23270)).